The following is a 73-amino-acid chain: Frenatin 3.1 (73 aa).

A signal peptide spans 1 to 22; the sequence is MHFLKKSIFLVLFLGLVSLSIC. Residues 23-46 constitute a propeptide that is removed on maturation; sequence EKEKREDQNEEEVDENEEASEEKR. A disordered region spans residues 25 to 45; it reads EKREDQNEEEVDENEEASEEK. Residues 30–42 are compositionally biased toward acidic residues; sequence QNEEEVDENEEAS.

In terms of tissue distribution, expressed by the skin glands.

The protein localises to the secreted. In terms of biological role, antimicrobial peptide with activity against both Gram-positive and Gram-negative bacteria. The protein is Frenatin 3.1 of Nyctimystes infrafrenatus (White-lipped tree frog).